The following is an 816-amino-acid chain: Phosphatidylinositol 4-kinase beta (816 aa).

Disordered regions lie at residues Met-1–Leu-30, Glu-101–Arg-120, and Ala-248–Ser-318. Gly-2 carries the post-translational modification N-acetylglycine. The interval Gly-2–Ile-68 is interaction with ACBD3. Residues Leu-29–Ser-242 form the PIK helical domain. Phosphoserine is present on Ser-258. At Thr-263 the chain carries Phosphothreonine. Phosphoserine occurs at positions 266, 275, 277, 284, and 294. 2 stretches are compositionally biased toward polar residues: residues Asp-278–Lys-297 and Ser-306–Ser-318. At Ser-428 the chain carries Phosphoserine. A Phosphothreonine modification is found at Thr-438. Ser-511 is modified (phosphoserine). Phosphothreonine is present on residues Thr-517 and Thr-519. Residues Glu-535–Thr-801 enclose the PI3K/PI4K catalytic domain. The tract at residues Val-541 to Gly-547 is G-loop. The interval Gln-668–Asn-676 is catalytic loop. The activation loop stretch occupies residues His-687–Thr-711.

Belongs to the PI3/PI4-kinase family. Type III PI4K subfamily. As to quaternary structure, interacts with ARF1 and ARF3 in the Golgi complex, but not with ARF4, ARF5 or ARF6. Interacts with NCS1/FREQ in a calcium-independent manner. Interacts with CALN1/CABP8 and CALN2/CABP7; in a calcium-dependent manner; this interaction competes with NCS1/FREQ binding. Interacts with ACBD3. Interacts with ARMH3, YWHAB, YWHAE, YWHAG, YWHAH, YWHAQ, YWHAZ and SFN. Interacts with GGA2 (via VHS domain); the interaction is important for PI4KB location at the Golgi apparatus membrane. Interacts with ATG9A. Mg(2+) serves as cofactor. The cofactor is Mn(2+).

The protein localises to the endomembrane system. It is found in the mitochondrion outer membrane. It localises to the rough endoplasmic reticulum membrane. Its subcellular location is the golgi apparatus. The protein resides in the golgi apparatus membrane. It catalyses the reaction a 1,2-diacyl-sn-glycero-3-phospho-(1D-myo-inositol) + ATP = a 1,2-diacyl-sn-glycero-3-phospho-(1D-myo-inositol 4-phosphate) + ADP + H(+). Its activity is regulated as follows. Inhibited by wortmannin. Increased kinase activity upon interaction with NCS1/FREQ. Functionally, phosphorylates phosphatidylinositol (PI) in the first committed step in the production of the second messenger inositol-1,4,5,-trisphosphate (PIP). May regulate Golgi disintegration/reorganization during mitosis, possibly via its phosphorylation. Involved in Golgi-to-plasma membrane trafficking. In Bos taurus (Bovine), this protein is Phosphatidylinositol 4-kinase beta (PI4KB).